The primary structure comprises 309 residues: UDP-N-acetylenolpyruvoylglucosamine reductase (309 aa).

One can recognise an FAD-binding PCMH-type domain in the interval 25 to 188; the sequence is RVGGPADWLF…TSVTLQGNRE (164 aa). Residue Arg168 is part of the active site. The interval 202–231 is disordered; sequence AKRDATQPTKALTAGSTFRNPAGFSSTGQA. The segment covering 207 to 231 has biased composition (polar residues); that stretch reads TQPTKALTAGSTFRNPAGFSSTGQA. The active-site Proton donor is Ser217. The active site involves Glu299.

Belongs to the MurB family. Requires FAD as cofactor.

The protein resides in the cytoplasm. The catalysed reaction is UDP-N-acetyl-alpha-D-muramate + NADP(+) = UDP-N-acetyl-3-O-(1-carboxyvinyl)-alpha-D-glucosamine + NADPH + H(+). The protein operates within cell wall biogenesis; peptidoglycan biosynthesis. In terms of biological role, cell wall formation. The polypeptide is UDP-N-acetylenolpyruvoylglucosamine reductase (Jannaschia sp. (strain CCS1)).